We begin with the raw amino-acid sequence, 528 residues long: Sphingosine-1-phosphate lyase (528 aa).

The chain crosses the membrane as a helical span at residues 13–35 (PAKLVLATAGITAASILAYQAIT). At K324 the chain carries N6-(pyridoxal phosphate)lysine.

It belongs to the group II decarboxylase family. Sphingosine-1-phosphate lyase subfamily. Pyridoxal 5'-phosphate serves as cofactor.

It localises to the endoplasmic reticulum membrane. It catalyses the reaction sphinganine 1-phosphate = hexadecanal + phosphoethanolamine. The protein operates within lipid metabolism; sphingolipid metabolism. In terms of biological role, cleaves phosphorylated sphingoid bases (PSBs), such as sphingosine-1-phosphate, into fatty aldehydes and phosphoethanolamine. Sphingosine-1-phosphate (S1P) probably acts intracellularly as a second messenger perhaps by promoting cell proliferation; the absence of S1P lyase increases its concentration. This leads to increased lateral pseudopod formation as well as defects in the efficiency of chemotaxis. Overexpression of S1P lyase causes decreased growth rates, entry into stationary phase at lower cell density and increased sensitivity to the antitumor agents cisplatin and carboplatin; these effects are more pronounced in cells that express more enzyme. This Dictyostelium discoideum (Social amoeba) protein is Sphingosine-1-phosphate lyase (sglA).